A 1358-amino-acid chain; its full sequence is Protein STU1 (1358 aa).

Disordered regions lie at residues 915–950 (FVAD…SHGF) and 970–990 (QPET…DESN). A compositionally biased stretch (basic and acidic residues) spans 926 to 949 (DDTKKNGSDVVDHEEIRDHEESHG). Residues 973–990 (TVDENVDPMEVDSPDESN) are compositionally biased toward acidic residues.

This sequence belongs to the CLASP family. As to quaternary structure, interacts with microtubules.

Its subcellular location is the cytoplasm. The protein localises to the cytoskeleton. It localises to the nucleus. The protein resides in the spindle. Microtubule binding protein that promotes the stabilization of dynamic microtubules. Required for mitotic spindle formation. This chain is Protein STU1 (STU1), found in Kluyveromyces lactis (strain ATCC 8585 / CBS 2359 / DSM 70799 / NBRC 1267 / NRRL Y-1140 / WM37) (Yeast).